A 652-amino-acid chain; its full sequence is Leucine-rich repeat-containing protein 4 (652 aa).

Positions 1-40 are cleaved as a signal peptide; it reads MKLLWQVTVHHTWNAVLLPVVYLTAQVWILCAAIAAAASA. Topologically, residues 1–526 are extracellular; that stretch reads MKLLWQVTVH…SLDEVMKTTK (526 aa). Positions 41–74 constitute an LRRNT domain; it reads GPQNCPSVCSCSNQFSKVVCTRRGLSEVPQGIPS. 2 disulfides stabilise this stretch: Cys45/Cys51 and Cys49/Cys60. LRR repeat units lie at residues 75–96, 99–120, 123–144, 147–168, 171–193, 196–217, 218–239, 242–263, and 266–287; these read NTRY…TFRH, HLEV…AFNG, SLNT…AFEY, KLRE…AFNR, SLMR…AFEG, NLKY…TPLV, GLEE…SFHG, SLKK…AFDG, and SLVE…LFTP. An LRRCT domain is found at 299 to 351; it reads NPWNCDCDILWLAWWLREYIPTNSTCCGRCHAPMHMRGRYLVEVDQASFQCSA. Cystine bridges form between Cys303–Cys328 and Cys305–Cys349. N-linked (GlcNAc...) asparagine glycosylation is found at Asn321 and Asn362. One can recognise an Ig-like C2-type domain in the interval 352-441; the sequence is PFIMDAPRDL…SNASAYLNVS (90 aa). Cys373 and Cys423 are oxidised to a cystine. Residues 527–547 traverse the membrane as a helical segment; the sequence is IIIGCFVAVTLLAAAMLIVFY. Residues 548 to 652 are Cytoplasmic-facing; it reads KLRKRHQQRS…TKDKVQETQI (105 aa).

As to quaternary structure, interacts (via LRR repeats) with NTNG2. Interacts with DLG4. Found in a complex with NMDA receptors. In terms of processing, N-glycosylated. In terms of tissue distribution, mainly expressed in the brain. Expression is concentrated in the olfactory bulb, cortex, hippocampus and cerebellum in adult brain. Detected both embryonically and postnatally with stronger expression in postnatal stages.

It localises to the membrane. The protein localises to the postsynaptic cell membrane. Synaptic adhesion protein. Regulates the formation of exitatory synapses through the recruitment of pre-and-postsynaptic proteins. Organize the lamina/pathway-specific differentiation of dendrites. Plays an important role for auditory synaptic responses. Involved in the suppression of glioma. The chain is Leucine-rich repeat-containing protein 4 (Lrrc4) from Rattus norvegicus (Rat).